Reading from the N-terminus, the 265-residue chain is Undecaprenyl-diphosphatase (265 aa).

Transmembrane regions (helical) follow at residues 1–21, 39–59, 83–103, 114–134, 144–164, 188–208, 218–238, and 244–264; these read MDWF…FLPI, QGLA…MMYY, LKLG…GFLG, ALVI…SDAF, LGVA…IPGT, SFLL…KDLI, MMAL…VFFI, and VGML…LFWL.

Belongs to the UppP family.

The protein localises to the cell inner membrane. It catalyses the reaction di-trans,octa-cis-undecaprenyl diphosphate + H2O = di-trans,octa-cis-undecaprenyl phosphate + phosphate + H(+). Functionally, catalyzes the dephosphorylation of undecaprenyl diphosphate (UPP). Confers resistance to bacitracin. The chain is Undecaprenyl-diphosphatase from Alcanivorax borkumensis (strain ATCC 700651 / DSM 11573 / NCIMB 13689 / SK2).